The sequence spans 194 residues: Imidazoleglycerol-phosphate dehydratase (194 aa).

The protein belongs to the imidazoleglycerol-phosphate dehydratase family.

Its subcellular location is the cytoplasm. It carries out the reaction D-erythro-1-(imidazol-4-yl)glycerol 3-phosphate = 3-(imidazol-4-yl)-2-oxopropyl phosphate + H2O. It functions in the pathway amino-acid biosynthesis; L-histidine biosynthesis; L-histidine from 5-phospho-alpha-D-ribose 1-diphosphate: step 6/9. This Bacillus subtilis (strain 168) protein is Imidazoleglycerol-phosphate dehydratase.